The chain runs to 192 residues: MARLIDQFERLPGIGPRTAQRLALHLLNQPEEQIRQFADALLAARTQVGQCQTCFHLSADPECEICRNPERRNGLICVVADSRDLLALERTREFQGRYHVLGGLISPMDGIGPELLHVTPLVARINQEDITEVILALTPSVEGDTTSLYLARLLKPFCPVSRIAYGLPMGSELEYADEVTLSRALEGRRPLD.

A C4-type zinc finger spans residues 51-66 (CQTCFHLSADPECEIC). The 95-residue stretch at 74–168 (GLICVVADSR…PVSRIAYGLP (95 aa)) folds into the Toprim domain.

Belongs to the RecR family.

May play a role in DNA repair. It seems to be involved in an RecBC-independent recombinational process of DNA repair. It may act with RecF and RecO. The polypeptide is Recombination protein RecR (Parasynechococcus marenigrum (strain WH8102)).